The following is a 203-amino-acid chain: GTP-binding protein yptV1 (203 aa).

GTP contacts are provided by residues 15-23 (GDSGVGKSC), 33-40 (YTESYIST), 63-67 (DTAGQ), 121-124 (NKSD), and 151-153 (SAK). Residues 37-45 (YISTIGVDF) carry the Effector region motif. Residues 173–203 (MASQPVPPKPGGPVVRPTEGKPINNKSSSCC) form a disordered region. S-geranylgeranyl cysteine attachment occurs at residues Cys202 and Cys203.

The protein belongs to the small GTPase superfamily. Rab family.

The protein resides in the cell membrane. In terms of biological role, protein transport. Probably involved in vesicular traffic. The sequence is that of GTP-binding protein yptV1 (YPTV1) from Volvox carteri (Green alga).